The following is a 407-amino-acid chain: Protein S-acyltransferase 8 (407 aa).

A run of 2 helical transmembrane segments spans residues 29-49 and 62-82; these read SLPL…VFVA and GYAI…LLFF. One can recognise a DHHC domain in the interval 136-186; the sequence is KYCDTCMLYRPPRCSHCSICNNCVERFDHHCPWVGQCIGLRNYRYFFMFVS. The S-palmitoyl cysteine intermediate role is filled by C166. 2 helical membrane passes run 181–201 and 224–244; these read FFMF…MSAV and AVVL…LTAF. The tract at residues 348–368 is disordered; it reads AEDANNNQPHHTLDIDHERAG. The segment covering 358–368 has biased composition (basic and acidic residues); it reads HTLDIDHERAG. S385 carries the post-translational modification Phosphoserine.

Belongs to the DHHC palmitoyltransferase family. Expressed in flowers and pollen.

It is found in the cell membrane. The enzyme catalyses L-cysteinyl-[protein] + hexadecanoyl-CoA = S-hexadecanoyl-L-cysteinyl-[protein] + CoA. Functionally, S-acyltransferase involved in protein lipid modification. The polypeptide is Protein S-acyltransferase 8 (PAT08) (Arabidopsis thaliana (Mouse-ear cress)).